Here is a 410-residue protein sequence, read N- to C-terminus: Structural protein ORF142 (410 aa).

Disordered regions lie at residues 1 to 24 and 156 to 197; these read MNQN…HVDT and PTST…VNIS. The segment covering 161–188 has biased composition (acidic residues); that stretch reads DDNDNENRSDDDDDDDDYRNDREEVEDS.

The protein localises to the virion. The polypeptide is Structural protein ORF142 (Trichoplusia ni ascovirus 2c (TnAV-2c)).